Here is a 447-residue protein sequence, read N- to C-terminus: Signal recognition particle protein (447 aa).

GTP is bound by residues 108–115, 190–194, and 248–251; these read GLQGSGKT, DTAGR, and TKLD.

This sequence belongs to the GTP-binding SRP family. SRP54 subfamily. In terms of assembly, part of the signal recognition particle protein translocation system, which is composed of SRP and FtsY. Interacts with RNA.

It is found in the cytoplasm. It carries out the reaction GTP + H2O = GDP + phosphate + H(+). Involved in targeting and insertion of nascent membrane proteins into the cytoplasmic membrane. Binds to the hydrophobic signal sequence of the ribosome-nascent chain (RNC) as it emerges from the ribosomes. The SRP-RNC complex is then targeted to the cytoplasmic membrane where it interacts with the SRP receptor FtsY. This is Signal recognition particle protein from Mycoplasma mycoides.